We begin with the raw amino-acid sequence, 479 residues long: Beta-amyrin 28-monooxygenase (479 aa).

A helical transmembrane segment spans residues 5-25 (FYLSLLLLFVTFISLSLFFIF). Cysteine 426 serves as a coordination point for heme.

This sequence belongs to the cytochrome P450 family. The cofactor is heme. As to expression, expressed in roots, nodules and flowers.

It localises to the membrane. It catalyses the reaction beta-amyrin + 3 reduced [NADPH--hemoprotein reductase] + 3 O2 = oleanolate + 3 oxidized [NADPH--hemoprotein reductase] + 4 H2O + 4 H(+). In terms of biological role, catalyzes the carboxylation of beta-amyrin at the C-28 position to form oleanolic acid. Involved in an early step in the hemolytic saponin biosynthetic pathway. Catalyzes the carboxylation of alpha-amyrin and lupeol at the C-28 position to form ursolic acid and betulinic acid respectively. This Medicago truncatula (Barrel medic) protein is Beta-amyrin 28-monooxygenase.